We begin with the raw amino-acid sequence, 652 residues long: Putative enzymatic polyprotein (652 aa).

Positions 21–99 constitute a Peptidase A2 domain; it reads YHGLFDTGAN…SPDIIIGATF (79 aa). Residue Asp-26 is part of the active site. The region spanning 231–413 is the Reverse transcriptase domain; the sequence is FIEEKTNFED…EKIDFLGVQI (183 aa). Asp-301, Asp-364, and Asp-365 together coordinate Mg(2+).

The enzyme catalyses DNA(n) + a 2'-deoxyribonucleoside 5'-triphosphate = DNA(n+1) + diphosphate. The catalysed reaction is Endonucleolytic cleavage to 5'-phosphomonoester.. In terms of biological role, encodes for at least two polypeptides: protease (PR) and reverse transcriptase (RT). The protease processes the polyprotein in cis. Reverse transcriptase is multifunctional enzyme that converts the viral RNA genome into dsDNA in viral cytoplasmic capsids. This enzyme displays a DNA polymerase activity that can copy either DNA or RNA templates, and a ribonuclease H (RNase H) activity that cleaves the RNA strand of RNA-DNA heteroduplexes in a partially processive 3'- to 5'-endonucleasic mode. Neo-synthesized pregenomic RNA (pgRNA) are encapsidated, and reverse-transcribed inside the nucleocapsid. Partial (+)DNA is synthesized from the (-)DNA template and generates the relaxed circular DNA (RC-DNA) genome. After budding and infection, the RC-DNA migrates in the nucleus, and is converted into a plasmid-like covalently closed circular DNA (cccDNA). This chain is Putative enzymatic polyprotein, found in Cassava vein mosaic virus (CsVMV).